Here is a 353-residue protein sequence, read N- to C-terminus: Quinolinate synthase (353 aa).

Residues His47 and Ser68 each coordinate iminosuccinate. [4Fe-4S] cluster is bound at residue Cys113. Iminosuccinate is bound by residues 139–141 (YAN) and Ser156. Position 200 (Cys200) interacts with [4Fe-4S] cluster. Iminosuccinate-binding positions include 226–228 (HPE) and Thr243. Position 297 (Cys297) interacts with [4Fe-4S] cluster.

It belongs to the quinolinate synthase family. Type 1 subfamily. [4Fe-4S] cluster is required as a cofactor.

The protein resides in the cytoplasm. The catalysed reaction is iminosuccinate + dihydroxyacetone phosphate = quinolinate + phosphate + 2 H2O + H(+). It participates in cofactor biosynthesis; NAD(+) biosynthesis; quinolinate from iminoaspartate: step 1/1. Functionally, catalyzes the condensation of iminoaspartate with dihydroxyacetone phosphate to form quinolinate. In Vibrio vulnificus (strain CMCP6), this protein is Quinolinate synthase.